We begin with the raw amino-acid sequence, 175 residues long: 3-hydroxydecanoyl-[acyl-carrier-protein] dehydratase (175 aa).

His74 is a catalytic residue.

Belongs to the thioester dehydratase family. FabA subfamily. Homodimer.

It is found in the cytoplasm. The enzyme catalyses a (3R)-hydroxyacyl-[ACP] = a (2E)-enoyl-[ACP] + H2O. The catalysed reaction is (3R)-hydroxydecanoyl-[ACP] = (2E)-decenoyl-[ACP] + H2O. It carries out the reaction (2E)-decenoyl-[ACP] = (3Z)-decenoyl-[ACP]. It functions in the pathway lipid metabolism; fatty acid biosynthesis. Its function is as follows. Necessary for the introduction of cis unsaturation into fatty acids. Catalyzes the dehydration of (3R)-3-hydroxydecanoyl-ACP to E-(2)-decenoyl-ACP and then its isomerization to Z-(3)-decenoyl-ACP. Can catalyze the dehydratase reaction for beta-hydroxyacyl-ACPs with saturated chain lengths up to 16:0, being most active on intermediate chain length. This Alcanivorax borkumensis (strain ATCC 700651 / DSM 11573 / NCIMB 13689 / SK2) protein is 3-hydroxydecanoyl-[acyl-carrier-protein] dehydratase.